We begin with the raw amino-acid sequence, 151 residues long: Small ribosomal subunit protein uS9 (151 aa).

The span at 1–19 shows a compositional bias: low complexity; that stretch reads MTETTPAPQTPAAPAGPAQ. Disordered regions lie at residues 1 to 20 and 121 to 151; these read MTETTPAPQTPAAPAGPAQS and KAGFLTRDPRATERKKYGLKKARKAPQYSKR. The span at 127–136 shows a compositional bias: basic and acidic residues; the sequence is RDPRATERKK. Over residues 137-151 the composition is skewed to basic residues; it reads YGLKKARKAPQYSKR.

It belongs to the universal ribosomal protein uS9 family.

The sequence is that of Small ribosomal subunit protein uS9 (rpsI) from Mycobacterium bovis (strain ATCC BAA-935 / AF2122/97).